The following is a 392-amino-acid chain: DNA-directed RNA polymerase subunit Rpo1C (392 aa).

The protein belongs to the RNA polymerase beta' chain family. As to quaternary structure, part of the RNA polymerase complex.

The protein localises to the cytoplasm. The catalysed reaction is RNA(n) + a ribonucleoside 5'-triphosphate = RNA(n+1) + diphosphate. Functionally, DNA-dependent RNA polymerase (RNAP) catalyzes the transcription of DNA into RNA using the four ribonucleoside triphosphates as substrates. Forms part of the jaw domain. In Metallosphaera sedula (strain ATCC 51363 / DSM 5348 / JCM 9185 / NBRC 15509 / TH2), this protein is DNA-directed RNA polymerase subunit Rpo1C.